A 400-amino-acid polypeptide reads, in one-letter code: Telomere repeat-binding protein 6 (400 aa).

The region spanning 173 to 252 (VKFGIKSLNI…DDENLGSLGF (80 aa)) is the Ubiquitin-like domain. Positions 310–369 (VQRRIRRPFTVSEVEALVQAVERLGTGRWRDVKSHAFNHVNHRTYVDLKDKWKTLVHTAK) constitute an HTH myb-type domain. The H-T-H motif DNA-binding region spans 338–365 (WRDVKSHAFNHVNHRTYVDLKDKWKTLV).

As to quaternary structure, homodimer. In terms of tissue distribution, expressed ubiquitously.

The protein localises to the nucleus. In terms of biological role, binds specifically to the plant telomeric double-stranded DNA sequences. At least 4 repeats of telomeric sequences are required for binding. The protein is Telomere repeat-binding protein 6 (TRP6) of Arabidopsis thaliana (Mouse-ear cress).